Here is a 346-residue protein sequence, read N- to C-terminus: Tyrosine--tRNA ligase (346 aa).

The 'HIGH' region signature appears at 47–56 (PSGRIHIAQA). Positions 230 to 234 (KMSKS) match the 'KMSKS' region motif. Lys233 lines the ATP pocket.

It belongs to the class-I aminoacyl-tRNA synthetase family. In terms of assembly, homodimer.

The enzyme catalyses tRNA(Tyr) + L-tyrosine + ATP = L-tyrosyl-tRNA(Tyr) + AMP + diphosphate + H(+). Functionally, catalyzes the attachment of tyrosine to tRNA(Tyr) in a two-step reaction: tyrosine is first activated by ATP to form Tyr-AMP and then transferred to the acceptor end of tRNA(Tyr). The polypeptide is Tyrosine--tRNA ligase (YARS) (Acanthamoeba polyphaga (Amoeba)).